Reading from the N-terminus, the 1238-residue chain is MPAPHRLYPRSLICLAQALLAWALLAWAPAQASQELTLVGKAAVPDVEIALDGDDWRWLARKRVLTLGVYAPDIPPFDVTYDERYEGLTADYMAIIAHNLGVQAKVLRYPTREQAVGALESGQIDLIGTVNGIEGRLQSLRLSVPYAADHPVLVMPIGARRAPPADLAGQRLAVDANYLPRETLQQAYPQATLHYFPSSEQALAAVAYGQADVFIGDALTTSHLVSQSYFNDVRVVAPAQIVTGGESFGVRADNTRLLRVVNAVLEAIPASERRSLIYRWGLGSSISLDFARPAYSAREQQWMANHPVVKVAVLNLFAPFTLFRTDEQFGGISAAVLQLLQLRTGLDFQIIGVDTVEELIAKLRSGEADMAGALFVNAARESVLSFSRPYVRNGMVIVTRQDPAAPADADHLDGRTIAMVRNSAAIPLLQQRYPQAKVVTADNPTEAMLLVADGQADAVVQTQISASYYVNRYFAGKLRIASALDLPPAEIALATARGQTELISILNKALYSISNDELASIVSRWRGSDGDPRTWYAYRNEIYLLIGLGLLSALLFLSWIVYLRRQIRQRKRAERALNDQLEFMRVLIDGTPNPIYVRDKEGRMLLCNDAYLDTFGVTADAVLGKTIPEANVVGDPALAREMHEFLLTRMSAEREPRFEDRDVTLHGRTRHVYQWTVPYGDSLGELKGIIGGWIDITERAELLRELHDAKESADAANRAKTTFLATMSHEIRTPMNAIIGMLELALLRPADQEPDRQSIQVAYDSARSLLELIGDILDIAKIEAGKFDLAPVRTALRALPEGAIRVFDGLARQKGIELVLKTDIVGVDDVLIDPLRMKQVLSNLVGNAIKFTTEGQVVLTVTARPDGEAAHVQFSVSDTGCGISEADQRQLFKPFSQVGGSAEAGPAPGTGLGLSISRRLVELMGGTLVMRSAPGVGTTVSVDLRLTMVEKSAQATPPAAAAQATPSKPQVSLRVLVVDDHKPNLMLLRQQLDYLGQRVVAADSGEAALALWHEHAFDVVITDCNMPGINGYELARRIRAAEAAPGYGRTRCILFGFTASAQMDEAQRCRAAGMDDCLFKPIGVDALRQRLNEAAARAALPTPPSPQAAAPATHDATPAAFSAESILALTQNDEALIRQLLEELIRTNRADVDQLQKLHQQADWPKVSDMAHRLAGGARVVDAKAMIDTALALEKKAQGQAGPSPEIDGMVRTLAAQSAALETQLRAWLEQRPHQGQP.

An N-terminal signal peptide occupies residues 1 to 30 (MPAPHRLYPRSLICLAQALLAWALLAWAPA). The Cytoplasmic portion of the chain corresponds to 33 to 307 (SQELTLVGKA…REQQWMANHP (275 aa)). The chain crosses the membrane as a helical span at residues 308-331 (VVKVAVLNLFAPFTLFRTDEQFGG). Residues 332–541 (ISAAVLQLLQ…PRTWYAYRNE (210 aa)) are Periplasmic-facing. Residues 542-563 (IYLLIGLGLLSALLFLSWIVYL) traverse the membrane as a helical segment. Residues 564–1238 (RRQIRQRKRA…LEQRPHQGQP (675 aa)) lie on the Cytoplasmic side of the membrane. The 72-residue stretch at 580-651 (QLEFMRVLID…MHEFLLTRMS (72 aa)) folds into the PAS domain. The PAC domain occupies 652-708 (AEREPRFEDRDVTLHGRTRHVYQWTVPYGDSLGELKGIIGGWIDITERAELLRELHD). The Histidine kinase domain occupies 726–948 (TMSHEIRTPM…TVSVDLRLTM (223 aa)). Histidine 729 is subject to Phosphohistidine; by autocatalysis. A Response regulatory domain is found at 974–1095 (RVLVVDDHKP…ALRQRLNEAA (122 aa)). Position 1023 is a 4-aspartylphosphate (aspartate 1023). The HPt domain occupies 1133–1228 (DEALIRQLLE…AALETQLRAW (96 aa)). A Phosphohistidine modification is found at histidine 1172.

Post-translationally, activation requires a sequential transfer of a phosphate group from a His in the primary transmitter domain, to an Asp in the receiver domain and to a His in the secondary transmitter domain.

It is found in the cell inner membrane. The enzyme catalyses ATP + protein L-histidine = ADP + protein N-phospho-L-histidine.. Functionally, member of the two-component regulatory system BvgS/BvgA. Phosphorylates BvgA via a four-step phosphorelay in response to environmental signals. In Bordetella bronchiseptica (strain ATCC BAA-588 / NCTC 13252 / RB50) (Alcaligenes bronchisepticus), this protein is Virulence sensor protein BvgS (bvgS).